A 235-amino-acid chain; its full sequence is Phosphoribosylaminoimidazole-succinocarboxamide synthase (235 aa).

Belongs to the SAICAR synthetase family.

The catalysed reaction is 5-amino-1-(5-phospho-D-ribosyl)imidazole-4-carboxylate + L-aspartate + ATP = (2S)-2-[5-amino-1-(5-phospho-beta-D-ribosyl)imidazole-4-carboxamido]succinate + ADP + phosphate + 2 H(+). Its pathway is purine metabolism; IMP biosynthesis via de novo pathway; 5-amino-1-(5-phospho-D-ribosyl)imidazole-4-carboxamide from 5-amino-1-(5-phospho-D-ribosyl)imidazole-4-carboxylate: step 1/2. This chain is Phosphoribosylaminoimidazole-succinocarboxamide synthase, found in Streptococcus thermophilus (strain CNRZ 1066).